Consider the following 141-residue polypeptide: Hemoglobin subunit alpha (141 aa).

The Globin domain occupies 1–141 (VLSPADKTNV…VSTVLTSKYR (141 aa)). A Phosphoserine modification is found at serine 3. Lysine 7 carries the N6-succinyllysine modification. A Phosphothreonine modification is found at threonine 8. Position 11 is an N6-succinyllysine (lysine 11). Lysine 16 is modified (N6-acetyllysine; alternate). At lysine 16 the chain carries N6-succinyllysine; alternate. Position 24 is a phosphotyrosine (tyrosine 24). Serine 35 is modified (phosphoserine). An N6-succinyllysine modification is found at lysine 40. Phosphoserine is present on serine 49. Histidine 58 contacts O2. Histidine 87 serves as a coordination point for heme b. The residue at position 102 (serine 102) is a Phosphoserine. Threonine 108 carries the post-translational modification Phosphothreonine. Serine 124 is subject to Phosphoserine. Phosphothreonine occurs at positions 134 and 137. Serine 138 bears the Phosphoserine mark.

Belongs to the globin family. Heterotetramer of two alpha chains and two beta chains. Red blood cells.

Functionally, involved in oxygen transport from the lung to the various peripheral tissues. In terms of biological role, hemopressin acts as an antagonist peptide of the cannabinoid receptor CNR1. Hemopressin-binding efficiently blocks cannabinoid receptor CNR1 and subsequent signaling. The sequence is that of Hemoglobin subunit alpha (HBA) from Odobenus rosmarus divergens (Pacific walrus).